The following is a 138-amino-acid chain: Spermidine export protein MdtJ (138 aa).

4 helical membrane-spanning segments follow: residues 1-21 (MIYWLFLAMAIITEVIGTLSM), 30-50 (VVGMAVMYIMIATSYILLAMA), 54-74 (VALGVAYALWEGVGILFITVF), and 81-101 (ESLSLMKVGGLALLITGIMLI).

It belongs to the drug/metabolite transporter (DMT) superfamily. Small multidrug resistance (SMR) (TC 2.A.7.1) family. MdtJ subfamily. In terms of assembly, forms a complex with MdtI.

Its subcellular location is the cell inner membrane. Functionally, catalyzes the excretion of spermidine. The protein is Spermidine export protein MdtJ of Photorhabdus laumondii subsp. laumondii (strain DSM 15139 / CIP 105565 / TT01) (Photorhabdus luminescens subsp. laumondii).